We begin with the raw amino-acid sequence, 489 residues long: Homoserine O-acetyltransferase (489 aa).

One can recognise an AB hydrolase-1 domain in the interval 69 to 438 (LLLCHALSGS…AEGHDGFLLE (370 aa)). The active-site Nucleophile is serine 163. The disordered stretch occupies residues 255 to 329 (ASRHPYPDRL…QTTDSSSLNQ (75 aa)). The segment covering 280 to 290 (EGNRNRRERPC) has biased composition (basic and acidic residues). Low complexity predominate over residues 299–329 (SESALNSPASSVSSLPSLGASQTTDSSSLNQ). Residues aspartate 403 and histidine 432 contribute to the active site.

Belongs to the AB hydrolase superfamily. MetX family.

It localises to the cytoplasm. The enzyme catalyses L-homoserine + acetyl-CoA = O-acetyl-L-homoserine + CoA. It participates in amino-acid biosynthesis; L-methionine biosynthesis via de novo pathway; O-acetyl-L-homoserine from L-homoserine: step 1/1. In terms of biological role, commits homoserine to the methionine biosynthesis pathway by catalyzing its O-acetylation. This is Homoserine O-acetyltransferase (met6) from Schizosaccharomyces pombe (strain 972 / ATCC 24843) (Fission yeast).